The sequence spans 83 residues: MGSDCGCGGYLWSMLKRVEIEVDDDLIQKVIRRYRVKGAREAVNLALRTLLGEADTAEHGHDDEYDEFSDPNAWVPRRSRDTG.

Positions Glu58–Gly83 are disordered.

This is an uncharacterized protein from Mycobacterium tuberculosis (strain CDC 1551 / Oshkosh).